Reading from the N-terminus, the 73-residue chain is Small ribosomal subunit protein bS18c (73 aa).

This sequence belongs to the bacterial ribosomal protein bS18 family. As to quaternary structure, part of the 30S ribosomal subunit.

The protein localises to the plastid. Its subcellular location is the chloroplast. This chain is Small ribosomal subunit protein bS18c (rps18), found in Guillardia theta (Cryptophyte).